We begin with the raw amino-acid sequence, 395 residues long: uncharacterized protein (395 aa).

A run of 10 helical transmembrane segments spans residues 19–39 (IGIASLIGIVGGLSSVIIAII), 49–69 (VLLIPIVFFIAGLFVDYIYEL), 87–107 (LTWIRGLLKVLLAGAVIAVGG), 137–157 (LVIITGIAGGLGGAFSAPLGT), 172–192 (YINLIPPIIASVVGYLIFYLI), 206–226 (TINIHDFLLFILGAFFCSLIA), 252–272 (LIGGILVAVISYFIPEVMGMG), 279–299 (LFIMEFSLVFLVLLLIGKILA), 311–331 (GLVFPSMCIGAISGIIFGSLI), and 359–379 (VLCTEIFGFDFAVPASIGAVI).

This sequence belongs to the chloride channel (TC 2.A.49) family.

The protein resides in the cell membrane. This is an uncharacterized protein from Methanocaldococcus jannaschii (strain ATCC 43067 / DSM 2661 / JAL-1 / JCM 10045 / NBRC 100440) (Methanococcus jannaschii).